The primary structure comprises 200 residues: Anthranilate synthase component 2 (200 aa).

The region spanning 3–196 (NILLLDNIDS…IHWASLKYIT (194 aa)) is the Glutamine amidotransferase type-1 domain. 57 to 59 (GPS) contacts L-glutamine. Cys-84 (nucleophile; for GATase activity) is an active-site residue. L-glutamine is bound by residues Gln-88 and 134–135 (SL). Catalysis depends on for GATase activity residues His-170 and Glu-172.

Heterotetramer consisting of two non-identical subunits: a beta subunit (TrpG) and a large alpha subunit (TrpE).

The catalysed reaction is chorismate + L-glutamine = anthranilate + pyruvate + L-glutamate + H(+). It functions in the pathway amino-acid biosynthesis; L-tryptophan biosynthesis; L-tryptophan from chorismate: step 1/5. Functionally, part of a heterotetrameric complex that catalyzes the two-step biosynthesis of anthranilate, an intermediate in the biosynthesis of L-tryptophan. In the first step, the glutamine-binding beta subunit (TrpG) of anthranilate synthase (AS) provides the glutamine amidotransferase activity which generates ammonia as a substrate that, along with chorismate, is used in the second step, catalyzed by the large alpha subunit of AS (TrpE) to produce anthranilate. In the absence of TrpG, TrpE can synthesize anthranilate directly from chorismate and high concentrations of ammonia. The chain is Anthranilate synthase component 2 (trpG) from Buchnera aphidicola subsp. Acyrthosiphon pisum (strain APS) (Acyrthosiphon pisum symbiotic bacterium).